The following is a 448-amino-acid chain: Beta-glucosidase B (448 aa).

The active-site Proton donor is the Glu167. The active-site Nucleophile is Glu356.

This sequence belongs to the glycosyl hydrolase 1 family.

It carries out the reaction Hydrolysis of terminal, non-reducing beta-D-glucosyl residues with release of beta-D-glucose.. The chain is Beta-glucosidase B (bglB) from Paenibacillus polymyxa (Bacillus polymyxa).